The primary structure comprises 199 residues: Ribosome maturation factor RimM (199 aa).

A PRC barrel domain is found at 100–195 (ADEWYPKDLI…YLTLDPPGGL (96 aa)).

This sequence belongs to the RimM family. Binds ribosomal protein uS19.

The protein localises to the cytoplasm. Its function is as follows. An accessory protein needed during the final step in the assembly of 30S ribosomal subunit, possibly for assembly of the head region. Essential for efficient processing of 16S rRNA. May be needed both before and after RbfA during the maturation of 16S rRNA. It has affinity for free ribosomal 30S subunits but not for 70S ribosomes. This chain is Ribosome maturation factor RimM, found in Bifidobacterium longum (strain DJO10A).